A 259-amino-acid chain; its full sequence is NAD kinase (259 aa).

D43 acts as the Proton acceptor in catalysis. NAD(+) is bound by residues 43–44 (DG), 111–112 (NE), and R136.

The protein belongs to the NAD kinase family. It depends on a divalent metal cation as a cofactor.

The protein localises to the cytoplasm. It catalyses the reaction NAD(+) + ATP = ADP + NADP(+) + H(+). Its function is as follows. Involved in the regulation of the intracellular balance of NAD and NADP, and is a key enzyme in the biosynthesis of NADP. Catalyzes specifically the phosphorylation on 2'-hydroxyl of the adenosine moiety of NAD to yield NADP. This is NAD kinase from Mycoplasma pneumoniae (strain ATCC 29342 / M129 / Subtype 1) (Mycoplasmoides pneumoniae).